Reading from the N-terminus, the 1129-residue chain is MPSEVPESLVQALAQILHEHGDKVLDGSRILALLTPCLQVVTRLFEQLFPRGPGTGFQALPAHPADSVPILRAQFMLDMLQKTPSLKLVHPAECPRQFDVNIFPFKSLRSLELRCLPPHCLRGLRSVYSQLEVLTCYRCVSSLEEVIALCGGDLSSALPWLVLHTLDFSYNTLKNLDGSLELLNSLKILDLSHNQITECGSYLKVLSELQYLNLGYNHLTAVPELSVGNTAKLHSLILKHNQLSGTSGLENLPNLQHLDLSYNLLLEHSQLSGLARLHNLKQLFLEGNPLYFQKDYRALTAQHLSHKASDNVLLDGKLLSSSEIMNAQAFGEKVRLQPSSSATESSCTGDLTDSYSAAEKSAPRLPRKKSRVKVRTASISERSDSEYERRGQPIVLQHQREIERTDSFREQYGEDWLQYRPHLEGELDPEYVNRPHSPPPRASPSPTAPSSVPKQKSPVPAPEPSPSPKSGHVAPDDQLMEKAEEGLEEHLWGLQEAKKPNEEEGLIGGALCSPVVVCPVLNGQPRNPDWPWVFLRITLHFLLEMDPERGRILLKRELRSLRGIQTSLAPWKCNGEEQELPLLTLSFDSVCEEKQTVNYIVLDNSPESSVTTLLDLLRPMLERNLREKAESQDELTRMQCLKCKAEFRNEVDGGDIYSPESLQQGKEPTAGLHRNHTGDASCPSCGSLHIILAPLNPTGETSTPLRPLSAEPPQGDDGGGGLAAKSFYLSEDEDSSETDSSPNTAPSEAESTIFYSFDTEGQDQQSAQDTGRSSLTGSYKYTALNQSGALSQDGWQISPGPASTLDFRLVDHRLKLYLDMEVLNGDMEEFRCCMKVPVIRFGKVSEFWAVVAVSNQKIYFLEITGEIRDNPSDWLQPIESQSLTSLARLHVGLQEHSLHLGFGGSGGAYTLLTRNQQHCRVFHKHMLDVLAELPARYLGNIQQSSEEPITPQHRLWPFLQDKVGAPESNAPPRFLYVPLFFLREDIVSPNADSPCANANSQLPLLNTASPAALIQGAAAAAPLSLLVTRTHMYLLEEDHQWLPDTLDTELPDSVQMKEKQPISNISSVHLFQSATLHLRIHLYNETQQNESAWLLWTEDPDRTREIVEWLREPWEAEYHIHFNPVTHNT.

8 LRR repeats span residues 107 to 128 (SLRSLELRCLPPHCLRGLRSVY), 130 to 150 (QLEVLTCYRCVSSLEEVIALC), 162 to 183 (VLHTLDFSYNTLKNLDGSLELL), 185 to 206 (SLKILDLSHNQITECGSYLKVL), 208 to 229 (ELQYLNLGYNHLTAVPELSVGN), 232 to 253 (KLHSLILKHNQLSGTSGLENLP), 254 to 275 (NLQHLDLSYNLLLEHSQLSGLA), and 279 to 300 (NLKQLFLEGNPLYFQKDYRALT). Disordered regions lie at residues 335-392 (RLQP…RRGQ), 428-475 (DPEY…HVAP), 654-678 (GDIYSPESLQQGKEPTAGLHRNHTG), and 696-724 (NPTGETSTPLRPLSAEPPQGDDGGGGLAA). Residues 337 to 355 (QPSSSATESSCTGDLTDSY) are compositionally biased toward polar residues. The span at 365–374 (LPRKKSRVKV) shows a compositional bias: basic residues. Residues 381–391 (ERSDSEYERRG) show a composition bias toward basic and acidic residues. Pro residues predominate over residues 436-447 (HSPPPRASPSPT). Low complexity predominate over residues 448–458 (APSSVPKQKSP).

Belongs to the STK11IP family.

It localises to the cytoplasm. This chain is Serine/threonine-protein kinase 11-interacting protein (stk11ip), found in Xenopus tropicalis (Western clawed frog).